A 498-amino-acid chain; its full sequence is ATP synthase subunit beta, chloroplastic (498 aa).

ATP is bound at residue Gly172–Thr179.

Belongs to the ATPase alpha/beta chains family. As to quaternary structure, F-type ATPases have 2 components, CF(1) - the catalytic core - and CF(0) - the membrane proton channel. CF(1) has five subunits: alpha(3), beta(3), gamma(1), delta(1), epsilon(1). CF(0) has four main subunits: a(1), b(1), b'(1) and c(9-12).

The protein resides in the plastid. It localises to the chloroplast thylakoid membrane. The catalysed reaction is ATP + H2O + 4 H(+)(in) = ADP + phosphate + 5 H(+)(out). Functionally, produces ATP from ADP in the presence of a proton gradient across the membrane. The catalytic sites are hosted primarily by the beta subunits. The chain is ATP synthase subunit beta, chloroplastic from Nicotiana sp. (Tobacco).